Consider the following 801-residue polypeptide: Phenylalanine--tRNA ligase beta subunit (801 aa).

In terms of domain architecture, tRNA-binding spans Gly39–Phe147. One can recognise a B5 domain in the interval Val401–Thr477. Mg(2+) is bound by residues Asp455, Asp461, Glu464, and Glu465. The 94-residue stretch at Ser708–Arg801 folds into the FDX-ACB domain.

This sequence belongs to the phenylalanyl-tRNA synthetase beta subunit family. Type 1 subfamily. In terms of assembly, tetramer of two alpha and two beta subunits. It depends on Mg(2+) as a cofactor.

It is found in the cytoplasm. The catalysed reaction is tRNA(Phe) + L-phenylalanine + ATP = L-phenylalanyl-tRNA(Phe) + AMP + diphosphate + H(+). The polypeptide is Phenylalanine--tRNA ligase beta subunit (Geobacter sulfurreducens (strain ATCC 51573 / DSM 12127 / PCA)).